Consider the following 741-residue polypeptide: uncharacterized protein (741 aa).

A signal peptide spans 1-18; sequence MKTISILAFLVLARLIEA. Disordered stretches follow at residues 142–300, 423–528, and 646–681; these read PKVE…GNVD, EEDE…SEQG, and ETVA…VEDD. The segment covering 147–165 has biased composition (acidic residues); it reads EEEEEEYDGEEDDDDESLT. 2 stretches are compositionally biased toward low complexity: residues 183 to 197 and 205 to 266; these read VEPS…STTE and STTV…SSTT. N-linked (GlcNAc...) asparagine glycans are attached at residues N232 and N241. Over residues 423-432 the composition is skewed to acidic residues; the sequence is EEDEIDETET. Residues 433–451 are compositionally biased toward low complexity; it reads TESTKTTETTKTTGPAETT. N461 and N511 each carry an N-linked (GlcNAc...) asparagine glycan. The span at 500–511 shows a compositional bias: acidic residues; that stretch reads PIDESTESEEPN. Residues 512 to 528 show a composition bias toward low complexity; the sequence is ESVTVTGDTTTDTSEQG. The segment covering 646–656 has biased composition (polar residues); it reads ETVAPDTNSPD. The span at 657–671 shows a compositional bias: acidic residues; it reads ADQEQPDSVEPDNET. Residue N669 is glycosylated (N-linked (GlcNAc...) asparagine). The GPI-anchor amidated asparagine moiety is linked to residue N719. A propeptide spans 720-741 (removed in mature form); the sequence is AANLAGSISLSSGVLLLILMLI.

It localises to the cell membrane. This is an uncharacterized protein from Candida albicans (strain SC5314 / ATCC MYA-2876) (Yeast).